The sequence spans 406 residues: Multifunctional CCA protein (406 aa).

ATP contacts are provided by Gly8 and Arg11. CTP contacts are provided by Gly8 and Arg11. The Mg(2+) site is built by Asp21 and Asp23. ATP contacts are provided by Arg91, Arg137, and Arg140. CTP is bound by residues Arg91, Arg137, and Arg140. An HD domain is found at 228–329 (TGIHTLMVAE…IKILNKFDVW (102 aa)).

This sequence belongs to the tRNA nucleotidyltransferase/poly(A) polymerase family. Bacterial CCA-adding enzyme type 1 subfamily. As to quaternary structure, monomer. Can also form homodimers and oligomers. It depends on Mg(2+) as a cofactor. Ni(2+) serves as cofactor.

It carries out the reaction a tRNA precursor + 2 CTP + ATP = a tRNA with a 3' CCA end + 3 diphosphate. The catalysed reaction is a tRNA with a 3' CCA end + 2 CTP + ATP = a tRNA with a 3' CCACCA end + 3 diphosphate. Its function is as follows. Catalyzes the addition and repair of the essential 3'-terminal CCA sequence in tRNAs without using a nucleic acid template. Adds these three nucleotides in the order of C, C, and A to the tRNA nucleotide-73, using CTP and ATP as substrates and producing inorganic pyrophosphate. tRNA 3'-terminal CCA addition is required both for tRNA processing and repair. Also involved in tRNA surveillance by mediating tandem CCA addition to generate a CCACCA at the 3' terminus of unstable tRNAs. While stable tRNAs receive only 3'-terminal CCA, unstable tRNAs are marked with CCACCA and rapidly degraded. This chain is Multifunctional CCA protein, found in Vibrio parahaemolyticus serotype O3:K6 (strain RIMD 2210633).